The chain runs to 59 residues: Arabinogalactan protein 13 (59 aa).

An N-terminal signal peptide occupies residues 1–27 (MEAMKMRLFVAVLVAAMAFSAVQQAAA). Proline 31, proline 33, and proline 35 each carry 4-hydroxyproline. Residues proline 31, proline 33, and proline 35 are each glycosylated (O-linked (Ara...) hydroxyproline). A lipid anchor (GPI-anchor amidated serine) is attached at serine 37. Positions 38–59 (DASLAIPAFFASVATLAFGFLF) are cleaved as a propeptide — removed in mature form.

The protein belongs to the AG-peptide AGP family. In terms of processing, contains 4-hydroxyproline; hydroxylated on Pro-31, Pro-33 and Pro-35. Post-translationally, O-glycosylated on hydroxyprolines; noncontiguous hydroxylproline residues are glycosylated with arabinogalactan.

It localises to the cell membrane. Its function is as follows. Proteoglycan that seems to be implicated in diverse developmental roles such as differentiation, cell-cell recognition, embryogenesis and programmed cell death. In Arabidopsis thaliana (Mouse-ear cress), this protein is Arabinogalactan protein 13.